A 472-amino-acid chain; its full sequence is WD repeat-containing protein 88 (472 aa).

Positions 1 to 22 (MASPPRCSPTAHDRECKLPPPS) are disordered. WD repeat units follow at residues 100–139 (GHEH…VVRD), 143–182 (RPKA…LLWK), 184–224 (RYDT…TVSV), 228–267 (HHTR…TLLT), 271–310 (AHSN…FRNC), 319–358 (GHEG…RKLS), and 361–400 (GHND…EIPL). The interval 447–472 (LPADTSSSSSSSERENSPPPRGSKDD) is disordered. The span at 458 to 472 (SERENSPPPRGSKDD) shows a compositional bias: basic and acidic residues.

The chain is WD repeat-containing protein 88 (WDR88) from Homo sapiens (Human).